Here is a 442-residue protein sequence, read N- to C-terminus: ATP-dependent protease ATPase subunit HslU (442 aa).

ATP contacts are provided by residues Ile-18 and 60–65; that span reads GVGKTE. The tract at residues 136–157 is disordered; it reads LPKPKNDWESTETDSSSNTRQV. 3 residues coordinate ATP: Asp-255, Glu-320, and Arg-392.

The protein belongs to the ClpX chaperone family. HslU subfamily. As to quaternary structure, a double ring-shaped homohexamer of HslV is capped on each side by a ring-shaped HslU homohexamer. The assembly of the HslU/HslV complex is dependent on binding of ATP.

It localises to the cytoplasm. Its function is as follows. ATPase subunit of a proteasome-like degradation complex; this subunit has chaperone activity. The binding of ATP and its subsequent hydrolysis by HslU are essential for unfolding of protein substrates subsequently hydrolyzed by HslV. HslU recognizes the N-terminal part of its protein substrates and unfolds these before they are guided to HslV for hydrolysis. This chain is ATP-dependent protease ATPase subunit HslU, found in Shewanella baltica (strain OS185).